The primary structure comprises 179 residues: Crossover junction endodeoxyribonuclease RuvC (179 aa).

Catalysis depends on residues Asp7 and Glu67. 2 residues coordinate Mn(2+): Asp7 and Glu67. A DNA-binding loop motif is present at residues 68–74 (DQILRRQ). Active-site residues include His139 and Asp142. His139 provides a ligand contact to Mn(2+).

Belongs to the RuvC family. In terms of assembly, homodimer which binds Holliday junction (HJ) DNA. The HJ becomes 2-fold symmetrical on binding to RuvC with unstacked arms; it has a different conformation from HJ DNA in complex with RuvA. In the full resolvosome a probable DNA-RuvA(4)-RuvB(12)-RuvC(2) complex forms which resolves the HJ. Mn(2+) is required as a cofactor.

It localises to the cytoplasm. The catalysed reaction is Endonucleolytic cleavage at a junction such as a reciprocal single-stranded crossover between two homologous DNA duplexes (Holliday junction).. Functionally, the RuvA-RuvB-RuvC complex processes Holliday junction (HJ) DNA during genetic recombination and DNA repair. Endonuclease that resolves HJ intermediates. Cleaves cruciform DNA by making single-stranded nicks across the HJ at symmetrical positions within the homologous arms, probably yielding a 5'-phosphate and a 3'-hydroxyl group; requires a central core of homology in the junction. The consensus cleavage sequence is 5'-(G/C)TC(C/G)-3' (a different site than E.coli); cleavage occurs on the 3'-side of the TC dinucleotide at the point of strand exchange. Also resolves nicked HJ intermediates, replication forks and Y-junction DNA in vitro. HJ branch migration catalyzed by RuvA-RuvB allows RuvC to scan DNA until it finds its consensus sequence, where it cleaves and resolves the cruciform DNA. In terms of biological role, binds HJ DNA independently of homologous core or consensus sequence; Mn(2+) is not essential for binding but improves it, while &gt;1.0 mM Mg(2+) inhibit binding. Also binds Y-junction DNA less well. Requires a homologous core to cleave DNA. Another study shows divalent cations (Mn(2+), Mg(2+) and Ca(2+), tested up to 5.0 mM) improve DNA binding considerably over binding in their absence. The sequence is that of Crossover junction endodeoxyribonuclease RuvC from Deinococcus radiodurans (strain ATCC 13939 / DSM 20539 / JCM 16871 / CCUG 27074 / LMG 4051 / NBRC 15346 / NCIMB 9279 / VKM B-1422 / R1).